The following is a 381-amino-acid chain: Cytochrome b (381 aa).

A run of 4 helical transmembrane segments spans residues 34 to 54 (FGSL…FLAM), 78 to 99 (WLIR…YLHI), 114 to 134 (WNIG…GYVL), and 179 to 199 (FFAF…IHLL). Heme b is bound by residues H84 and H98. Heme b-binding residues include H183 and H197. Residue H202 coordinates a ubiquinone. The next 4 helical transmembrane spans lie at 227-247 (YKDL…ALFL), 289-309 (LGGV…PMLH), 321-341 (MTQF…WIGG), and 348-368 (FILV…IIIP).

This sequence belongs to the cytochrome b family. As to quaternary structure, the cytochrome bc1 complex contains 3 respiratory subunits (MT-CYB, CYC1 and UQCRFS1), 2 core proteins (UQCRC1 and UQCRC2) and probably 6 low-molecular weight proteins. Heme b is required as a cofactor.

The protein localises to the mitochondrion inner membrane. Its function is as follows. Component of the ubiquinol-cytochrome c reductase complex (complex III or cytochrome b-c1 complex) that is part of the mitochondrial respiratory chain. The b-c1 complex mediates electron transfer from ubiquinol to cytochrome c. Contributes to the generation of a proton gradient across the mitochondrial membrane that is then used for ATP synthesis. The chain is Cytochrome b (mt-cyb) from Squalus acanthias (Spiny dogfish).